A 282-amino-acid polypeptide reads, in one-letter code: HTH-type transcriptional activator RhaR (282 aa).

Positions 179–277 constitute an HTH araC/xylS-type domain; it reads DKLITRLAAS…GMTPSQWRHL (99 aa). DNA-binding regions (H-T-H motif) lie at residues 196–217 and 244–267; these read DKFC…RQQT and ISDI…TRET.

As to quaternary structure, binds DNA as a dimer.

The protein resides in the cytoplasm. In terms of biological role, activates expression of the rhaSR operon in response to L-rhamnose. The protein is HTH-type transcriptional activator RhaR of Shigella flexneri serotype 5b (strain 8401).